A 218-amino-acid polypeptide reads, in one-letter code: MYLFHLCLVFACVPCPTVQASKLCLGWLWGMDIDPYKEFGSSYQLLNFLPLDFFPDLNALVDTATALYEEELTGREHCSPHHTAIRQALVCWDELTKLIAWMSSNITSEQVRTIIVNHVNDTWGLKVRQSLWFHLSCLTFGQHTVQEFLVSFGVWIRTPAPYRPPNAPILSTLPEHTVIRRRGGARASRSPRRRTPSPRRRRSQSPRRRRSQSPSANC.

A signal peptide spans 1 to 20 (MYLFHLCLVFACVPCPTVQA). The HBEAG stretch occupies residues 26–28 (GWL). Basic residues predominate over residues 180–211 (RRRGGARASRSPRRRTPSPRRRRSQSPRRRRS). Positions 180-218 (RRRGGARASRSPRRRTPSPRRRRSQSPRRRRSQSPSANC) are disordered. The stretch at 190-196 (SPRRRTP) is one 1; half-length repeat. Positions 190 to 212 (SPRRRTPSPRRRRSQSPRRRRSQ) are 3 X 8 AA repeats of S-P-R-R-R-R-S-Q. Positions 190–218 (SPRRRTPSPRRRRSQSPRRRRSQSPSANC) are excised as a propeptide. 2 repeat units span residues 197–204 (SPRRRRSQ) and 205–212 (SPRRRRSQ).

It belongs to the orthohepadnavirus precore antigen family. As to quaternary structure, homodimerizes. Post-translationally, phosphorylated. In terms of processing, cleaved by host furin.

The protein resides in the secreted. It localises to the host nucleus. May regulate immune response to the intracellular capsid in acting as a T-cell tolerogen, by having an immunoregulatory effect which prevents destruction of infected cells by cytotoxic T-cells. This immune regulation may predispose to chronicity during perinatal infections and prevent severe liver injury during adult infections. This is External core antigen from Woodchuck hepatitis B virus (isolate 1) (WHV).